Here is a 187-residue protein sequence, read N- to C-terminus: UPF0398 protein LBA1157 (187 aa).

Belongs to the UPF0398 family.

The chain is UPF0398 protein LBA1157 from Lactobacillus acidophilus (strain ATCC 700396 / NCK56 / N2 / NCFM).